A 275-amino-acid chain; its full sequence is NH(3)-dependent NAD(+) synthetase (275 aa).

An ATP-binding site is contributed by 50–57; the sequence is GISGGVDS. Position 56 (Asp-56) interacts with Mg(2+). Residue Arg-147 coordinates deamido-NAD(+). Thr-167 contacts ATP. Glu-172 contacts Mg(2+). Residues Lys-180 and Asp-187 each coordinate deamido-NAD(+). The ATP site is built by Lys-196 and Thr-218. 267 to 268 serves as a coordination point for deamido-NAD(+); sequence HK.

The protein belongs to the NAD synthetase family. In terms of assembly, homodimer.

It carries out the reaction deamido-NAD(+) + NH4(+) + ATP = AMP + diphosphate + NAD(+) + H(+). The protein operates within cofactor biosynthesis; NAD(+) biosynthesis; NAD(+) from deamido-NAD(+) (ammonia route): step 1/1. Its function is as follows. Catalyzes the ATP-dependent amidation of deamido-NAD to form NAD. Uses ammonia as a nitrogen source. This is NH(3)-dependent NAD(+) synthetase from Pseudomonas aeruginosa (strain LESB58).